Here is a 159-residue protein sequence, read N- to C-terminus: Putative pre-16S rRNA nuclease (159 aa).

This sequence belongs to the YqgF nuclease family.

Its subcellular location is the cytoplasm. Its function is as follows. Could be a nuclease involved in processing of the 5'-end of pre-16S rRNA. The sequence is that of Putative pre-16S rRNA nuclease from Synechococcus sp. (strain JA-3-3Ab) (Cyanobacteria bacterium Yellowstone A-Prime).